Reading from the N-terminus, the 122-residue chain is NADH-quinone oxidoreductase subunit A (122 aa).

Helical transmembrane passes span M10–G30, I66–V86, and L91–A111.

This sequence belongs to the complex I subunit 3 family. As to quaternary structure, NDH-1 is composed of 14 different subunits. Subunits NuoA, H, J, K, L, M, N constitute the membrane sector of the complex.

The protein localises to the cell membrane. The catalysed reaction is a quinone + NADH + 5 H(+)(in) = a quinol + NAD(+) + 4 H(+)(out). NDH-1 shuttles electrons from NADH, via FMN and iron-sulfur (Fe-S) centers, to quinones in the respiratory chain. The immediate electron acceptor for the enzyme in this species is believed to be a menaquinone. Couples the redox reaction to proton translocation (for every two electrons transferred, four hydrogen ions are translocated across the cytoplasmic membrane), and thus conserves the redox energy in a proton gradient. This Bacillus anthracis protein is NADH-quinone oxidoreductase subunit A.